Reading from the N-terminus, the 34-residue chain is MSDIN-like toxin proprotein 7 (34 aa).

A propeptide spanning residues 1–10 is cleaved from the precursor; it reads MSDINATRLP. Positions 11 to 17 form a cross-link, cyclopeptide (Ala-Pro); sequence AWLTDCP. Positions 18–34 are excised as a propeptide; it reads CVGDDVNRLLTRGESLC.

The protein belongs to the MSDIN fungal toxin family. In terms of processing, processed by the macrocyclase-peptidase enzyme POPB to yield a toxic cyclic heptapeptide. POPB first removes 10 residues from the N-terminus. Conformational trapping of the remaining peptide forces the enzyme to release this intermediate rather than proceed to macrocyclization. The enzyme rebinds the remaining peptide in a different conformation and catalyzes macrocyclization of the N-terminal 7 residues. Expressed in basidiocarps.

In terms of biological role, probable toxin that belongs to the MSDIN-like toxin family responsible for a large number of food poisoning cases and deaths. The protein is MSDIN-like toxin proprotein 7 of Amanita exitialis (Guangzhou destroying angel).